A 150-amino-acid polypeptide reads, in one-letter code: Phosphoribosyl-AMP cyclohydrolase (150 aa).

Residue aspartate 93 participates in Mg(2+) binding. Position 94 (cysteine 94) interacts with Zn(2+). Aspartate 95 and aspartate 97 together coordinate Mg(2+). Zn(2+) contacts are provided by cysteine 112 and cysteine 119.

It belongs to the PRA-CH family. As to quaternary structure, homodimer. Mg(2+) serves as cofactor. It depends on Zn(2+) as a cofactor.

It localises to the cytoplasm. It carries out the reaction 1-(5-phospho-beta-D-ribosyl)-5'-AMP + H2O = 1-(5-phospho-beta-D-ribosyl)-5-[(5-phospho-beta-D-ribosylamino)methylideneamino]imidazole-4-carboxamide. It participates in amino-acid biosynthesis; L-histidine biosynthesis; L-histidine from 5-phospho-alpha-D-ribose 1-diphosphate: step 3/9. Catalyzes the hydrolysis of the adenine ring of phosphoribosyl-AMP. The chain is Phosphoribosyl-AMP cyclohydrolase from Rhizobium etli (strain CIAT 652).